The following is a 519-amino-acid chain: Lysine 5,6-aminomutase alpha subunit (519 aa).

57-59 (DEV) serves as a coordination point for adenosylcob(III)alamin. Residues 187–192 (RTTGQS), Ser241, Tyr266, Arg271, and Asn302 contribute to the pyridoxal 5'-phosphate site.

This sequence belongs to the KamD family. Heterotetramer of 2 alpha and 2 beta subunits. The cofactor is adenosylcob(III)alamin. It depends on pyridoxal 5'-phosphate as a cofactor.

The enzyme catalyses (3S)-3,6-diaminohexanoate = (3S,5S)-3,5-diaminohexanoate. The catalysed reaction is D-lysine = (2R,5S)-2,5-diaminohexanoate. It participates in amino-acid metabolism; lysine degradation. Its activity is regulated as follows. Rapidly inactivated in the presence of D-lysine and to a lesser extent in the absence of adenosylcobalamin (Adocbl). Activity is stable in the presence of Adocbl when D-lysine is absent. Adocbl imparts thermal stability at 37 degrees Celsius. Functionally, catalyzes the migration of the L-beta-lysine and D-lysine epsilon amino group to the delta carbon to produce 3,5-diaminohexanoate and 2,5-diaminohexanoate, respectively. The polypeptide is Lysine 5,6-aminomutase alpha subunit (kamD) (Acetoanaerobium sticklandii (strain ATCC 12662 / DSM 519 / JCM 1433 / CCUG 9281 / NCIMB 10654 / HF) (Clostridium sticklandii)).